Reading from the N-terminus, the 588-residue chain is Adenine deaminase (588 aa).

It belongs to the metallo-dependent hydrolases superfamily. Adenine deaminase family. Homodimer. Requires Mn(2+) as cofactor.

The enzyme catalyses adenine + H2O + H(+) = hypoxanthine + NH4(+). This Shigella boydii serotype 4 (strain Sb227) protein is Adenine deaminase.